Here is a 461-residue protein sequence, read N- to C-terminus: Argininosuccinate lyase (461 aa).

Ser-28, Asn-115, and Thr-160 together coordinate 2-(N(omega)-L-arginino)succinate. The active-site Proton acceptor is His-161. Ser-282 functions as the Proton donor in the catalytic mechanism. Residues Asn-290, Tyr-322, Gln-327, and Lys-330 each contribute to the 2-(N(omega)-L-arginino)succinate site.

The protein belongs to the lyase 1 family. Argininosuccinate lyase subfamily. As to quaternary structure, homotetramer.

The catalysed reaction is 2-(N(omega)-L-arginino)succinate = fumarate + L-arginine. It participates in amino-acid biosynthesis; L-arginine biosynthesis; L-arginine from L-ornithine and carbamoyl phosphate: step 3/3. This is Argininosuccinate lyase (arg7) from Schizosaccharomyces pombe (strain 972 / ATCC 24843) (Fission yeast).